Here is a 430-residue protein sequence, read N- to C-terminus: tRNA(Ile)-lysidine synthase (430 aa).

21-26 (SGGLDS) provides a ligand contact to ATP.

This sequence belongs to the tRNA(Ile)-lysidine synthase family.

It is found in the cytoplasm. It carries out the reaction cytidine(34) in tRNA(Ile2) + L-lysine + ATP = lysidine(34) in tRNA(Ile2) + AMP + diphosphate + H(+). Its function is as follows. Ligates lysine onto the cytidine present at position 34 of the AUA codon-specific tRNA(Ile) that contains the anticodon CAU, in an ATP-dependent manner. Cytidine is converted to lysidine, thus changing the amino acid specificity of the tRNA from methionine to isoleucine. The sequence is that of tRNA(Ile)-lysidine synthase from Salmonella schwarzengrund (strain CVM19633).